Consider the following 466-residue polypeptide: 5-hydroxytryptamine receptor (466 aa).

A disordered region spans residues Met-1–Ser-21. Over Met-1–Ser-66 the chain is Extracellular. Asn-2, Asn-10, Asn-29, Asn-41, Asn-45, and Asn-50 each carry an N-linked (GlcNAc...) asparagine glycan. Polar residues predominate over residues Asn-10 to Ser-21. A helical membrane pass occupies residues Val-67–Ile-89. Residues Glu-90 to Tyr-99 lie on the Cytoplasmic side of the membrane. Residues Leu-100 to Val-121 form a helical membrane-spanning segment. Over Tyr-122 to Asp-136 the chain is Extracellular. Cys-135 and Cys-215 are disulfide-bonded. The helical transmembrane segment at Met-137–Thr-158 threads the bilayer. Residues Asp-159–Arg-177 lie on the Cytoplasmic side of the membrane. Residues Ile-178 to Trp-200 form a helical membrane-spanning segment. Over Lys-201 to Thr-228 the chain is Extracellular. A helical membrane pass occupies residues Met-229–Ala-250. Topologically, residues Arg-251–Thr-386 are cytoplasmic. 2 disordered regions span residues Arg-255 to Arg-282 and Val-339 to Arg-360. Low complexity predominate over residues Val-339–Thr-353. The helical transmembrane segment at Leu-387 to Ile-410 threads the bilayer. Topologically, residues Cys-411 to Tyr-419 are extracellular. Residues Leu-420–Phe-442 form a helical membrane-spanning segment. The Cytoplasmic portion of the chain corresponds to Ser-443–Phe-466.

Belongs to the G-protein coupled receptor 1 family.

The protein resides in the cell membrane. Its function is as follows. This is a receptor for 5-hydroxytryptamine (serotonin), a biogenic hormone that function as a neurotransmitter, a hormone, and a mitogen. The polypeptide is 5-hydroxytryptamine receptor (Heliothis virescens (Tobacco budworm moth)).